The primary structure comprises 750 residues: Sulfhydryl oxidase 1 (750 aa).

An N-terminal signal peptide occupies residues 1–32 (MRRCGRHSGPPSLLLLLLLLPPLLLSVPGAYA). The region spanning 33–159 (ARLSVLYSSS…RMRLIDALES (127 aa)) is the Thioredoxin domain. Catalysis depends on nucleophile residues Cys-73 and Cys-76. Disulfide bonds link Cys-73-Cys-76 and Cys-104-Cys-113. N-linked (GlcNAc...) asparagine glycans are attached at residues Asn-133 and Asn-246. A disulfide bridge connects residues Cys-396 and Cys-408. The ERV/ALR sulfhydryl oxidase domain maps to 399-506 (SEPHFRGFPC…EDPQFPKVQW (108 aa)). FAD is bound by residues Arg-404, Trp-411, His-415, Asp-454, His-458, 481 to 488 (WTSHNRVN), Lys-503, and Trp-506. An intrachain disulfide couples Cys-452 to Cys-455. A disulfide bond links Cys-512 and Cys-515. Disordered regions lie at residues 545-567 (VRDP…ASPN) and 585-632 (EQAA…PEHT). Positions 587–597 (AASAASPGATA) are enriched in low complexity. Residues 710-730 (FLDISLCVGLYSVSFMGLLAM) form a helical membrane-spanning segment.

Belongs to the quiescin-sulfhydryl oxidase (QSOX) family. Monomer. FAD is required as a cofactor. N-glycosylated. O-glycosylated on Thr and Ser residues. Isoform 3: Detected in seminal vesicle fluid (at protein level). Isoform 1: Detected in brain, hypophysis, heart, testis and the seminal vesicle. Isoform 3: Highly expressed in the seminal vesicles followed by testis, heart, brain, thymus, hypophysis and lung. Also expressed in prostate, kidney, spleen, liver.

Its subcellular location is the golgi apparatus membrane. It localises to the secreted. It catalyses the reaction 2 R'C(R)SH + O2 = R'C(R)S-S(R)CR' + H2O2. In terms of biological role, catalyzes the oxidation of sulfhydryl groups in peptide and protein thiols to disulfides with the reduction of oxygen to hydrogen peroxide. Plays a role in disulfide bond formation in a variety of extracellular proteins. In fibroblasts, required for normal incorporation of laminin into the extracellular matrix, and thereby for normal cell-cell adhesion and cell migration. This chain is Sulfhydryl oxidase 1 (Qsox1), found in Rattus norvegicus (Rat).